The sequence spans 841 residues: Neuronal tyrosine-phosphorylated phosphoinositide-3-kinase adapter 1 (841 aa).

Disordered stretches follow at residues 1–45 (MNLL…PGVR), 64–448 (PASQ…PAAL), 655–679 (RAWN…TSGI), 745–769 (RPCS…PLPP), and 812–833 (LPSW…RRQH). Basic and acidic residues predominate over residues 8 to 25 (TKLEWRQHKEEEAKRSSS). Low complexity predominate over residues 26-39 (KEVAPAGSAGPAAG). The segment at 76–186 (SAMAPRSLSC…DESCPPGPSP (111 aa)) is involved in CYFIP1- and NCKAP1-binding. The span at 94-103 (VGGGPGGASG) shows a compositional bias: gly residues. Basic residues predominate over residues 114-123 (PPAKPRRHPS). A compositionally biased stretch (polar residues) spans 167–176 (SPNTQLSVSF). Residues 224-243 (FRGGGRSGGGLAGPPLGGGG) are compositionally biased toward gly residues. A compositionally biased stretch (acidic residues) spans 252–261 (SDSEESEAIY). Residues 279–295 (GPPPLTATSPPQQPHAL) show a composition bias toward pro residues. A compositionally biased stretch (pro residues) spans 759-769 (PALPLPLPLPP).

It belongs to the NYAP family. In terms of assembly, interacts with ACOT9, ARHGAP26 and PIK3R2. Interacts with components of the WAVE1 complex, CYFIP1 and NCKAP1; this interaction mediates PI3K-WAVE1 association and actin cytoskeleton remodeling. In terms of processing, phosphorylated on tyrosine residues by FYN upon stimulation with CNTN5.

Functionally, activates PI3K and concomitantly recruits the WAVE1 complex to the close vicinity of PI3K and regulates neuronal morphogenesis. The chain is Neuronal tyrosine-phosphorylated phosphoinositide-3-kinase adapter 1 (NYAP1) from Homo sapiens (Human).